Reading from the N-terminus, the 520-residue chain is Anthranilate synthase component 1 (520 aa).

L-tryptophan contacts are provided by residues serine 40 and 291–293 (PYM). 328–329 (GT) contributes to the chorismate binding site. Glutamate 361 provides a ligand contact to Mg(2+). Chorismate is bound by residues tyrosine 449, arginine 469, 483 to 485 (GAG), and glycine 485. Glutamate 498 serves as a coordination point for Mg(2+).

The protein belongs to the anthranilate synthase component I family. Heterotetramer consisting of two non-identical subunits: a beta subunit (TrpG) and a large alpha subunit (TrpE). Mg(2+) is required as a cofactor.

The catalysed reaction is chorismate + L-glutamine = anthranilate + pyruvate + L-glutamate + H(+). It functions in the pathway amino-acid biosynthesis; L-tryptophan biosynthesis; L-tryptophan from chorismate: step 1/5. Its activity is regulated as follows. Feedback inhibited by tryptophan. In terms of biological role, part of a heterotetrameric complex that catalyzes the two-step biosynthesis of anthranilate, an intermediate in the biosynthesis of L-tryptophan. In the first step, the glutamine-binding beta subunit (TrpG) of anthranilate synthase (AS) provides the glutamine amidotransferase activity which generates ammonia as a substrate that, along with chorismate, is used in the second step, catalyzed by the large alpha subunit of AS (TrpE) to produce anthranilate. In the absence of TrpG, TrpE can synthesize anthranilate directly from chorismate and high concentrations of ammonia. In Buchnera aphidicola subsp. Pemphigus spyrothecae, this protein is Anthranilate synthase component 1 (trpE).